A 389-amino-acid polypeptide reads, in one-letter code: uncharacterized protein (389 aa).

The next 4 helical transmembrane spans lie at 31–51 (LFIV…VEVI), 96–116 (IMQI…ALLV), 123–143 (APLV…MFPP), and 152–172 (MIDA…LPSS).

It to M.tuberculosis Rv2571c.

It is found in the cell membrane. This is an uncharacterized protein from Corynebacterium glutamicum (strain ATCC 13032 / DSM 20300 / JCM 1318 / BCRC 11384 / CCUG 27702 / LMG 3730 / NBRC 12168 / NCIMB 10025 / NRRL B-2784 / 534).